Reading from the N-terminus, the 546-residue chain is uncharacterized protein (546 aa).

The protein belongs to the IIV-6 098R family.

This is an uncharacterized protein from Aedes vexans (Inland floodwater mosquito).